Reading from the N-terminus, the 162-residue chain is NADH-quinone oxidoreductase subunit I (162 aa).

2 consecutive 4Fe-4S ferredoxin-type domains span residues 52–82 and 93–122; these read LRRY…IEAG and TRYD…EGPN. 8 residues coordinate [4Fe-4S] cluster: C62, C65, C68, C72, C102, C105, C108, and C112.

This sequence belongs to the complex I 23 kDa subunit family. NDH-1 is composed of 14 different subunits. Subunits NuoA, H, J, K, L, M, N constitute the membrane sector of the complex. [4Fe-4S] cluster serves as cofactor.

It localises to the cell inner membrane. It catalyses the reaction a quinone + NADH + 5 H(+)(in) = a quinol + NAD(+) + 4 H(+)(out). NDH-1 shuttles electrons from NADH, via FMN and iron-sulfur (Fe-S) centers, to quinones in the respiratory chain. The immediate electron acceptor for the enzyme in this species is believed to be ubiquinone. Couples the redox reaction to proton translocation (for every two electrons transferred, four hydrogen ions are translocated across the cytoplasmic membrane), and thus conserves the redox energy in a proton gradient. The protein is NADH-quinone oxidoreductase subunit I of Methylorubrum extorquens (strain PA1) (Methylobacterium extorquens).